The following is a 440-amino-acid chain: Acyltransferase Pun1 (440 aa).

Active-site proton acceptor residues include histidine 169 and aspartate 384.

The protein belongs to the plant acyltransferase family.

It catalyses the reaction vanillylamine + (6E)-8-methylnon-6-enoyl-CoA = capsaicin + CoA + H(+). The catalysed reaction is (6E)-8-methylnon-6-enoyl-CoA + 4-hydroxy-3-methoxy-benzenemethanol = capsiate + CoA. Functionally, involved in the biosynthesis of capsaicinoids and capsinoids natural products, pungent alkaloids synthesized from phenylpropanoid intermediates in the placental tissue of chili pepper fruit acting as repellant on herbivorous mammals and conferring spiciness to hot peppers. Catalyzes the biosynthesis of capsaicin, a pungent component, and of capsiate, a non-pungent component, from vanillylamine and vanillyl alcohol, respectively. Can transfer an acyl from 8-methylnon-6-enoyl-CoA to vanillylamine forming capsaicin and CoA. This is Acyltransferase Pun1 from Capsicum frutescens (Cayenne pepper).